The primary structure comprises 310 residues: D-alanine--D-alanine ligase (310 aa).

Residues 104–305 (KRLFHSEGLP…MPQLAERILQ (202 aa)) form the ATP-grasp domain. 135 to 190 (LGDFHGAAFVKPLDSGSSVGISRAVGKDELIRGVAKALSVSHRCMVERAIEGRELT) is a binding site for ATP. Residues D259, E272, and N274 each contribute to the Mg(2+) site.

The protein belongs to the D-alanine--D-alanine ligase family. It depends on Mg(2+) as a cofactor. Mn(2+) is required as a cofactor.

The protein localises to the cytoplasm. It catalyses the reaction 2 D-alanine + ATP = D-alanyl-D-alanine + ADP + phosphate + H(+). Its pathway is cell wall biogenesis; peptidoglycan biosynthesis. Functionally, cell wall formation. The protein is D-alanine--D-alanine ligase of Magnetococcus marinus (strain ATCC BAA-1437 / JCM 17883 / MC-1).